A 400-amino-acid chain; its full sequence is Tryptophan synthase beta chain (400 aa).

Residue K90 is modified to N6-(pyridoxal phosphate)lysine.

The protein belongs to the TrpB family. In terms of assembly, tetramer of two alpha and two beta chains. Requires pyridoxal 5'-phosphate as cofactor.

The catalysed reaction is (1S,2R)-1-C-(indol-3-yl)glycerol 3-phosphate + L-serine = D-glyceraldehyde 3-phosphate + L-tryptophan + H2O. It participates in amino-acid biosynthesis; L-tryptophan biosynthesis; L-tryptophan from chorismate: step 5/5. Functionally, the beta subunit is responsible for the synthesis of L-tryptophan from indole and L-serine. The sequence is that of Tryptophan synthase beta chain (trpB) from Bacillus subtilis (strain 168).